Here is a 206-residue protein sequence, read N- to C-terminus: Ribosomal RNA small subunit methyltransferase G (206 aa).

S-adenosyl-L-methionine contacts are provided by residues glycine 74, leucine 79, 125-126, and arginine 140; that span reads VE.

This sequence belongs to the methyltransferase superfamily. RNA methyltransferase RsmG family.

It localises to the cytoplasm. The catalysed reaction is guanosine(527) in 16S rRNA + S-adenosyl-L-methionine = N(7)-methylguanosine(527) in 16S rRNA + S-adenosyl-L-homocysteine. Functionally, specifically methylates the N7 position of guanine in position 527 of 16S rRNA. The polypeptide is Ribosomal RNA small subunit methyltransferase G (Shewanella amazonensis (strain ATCC BAA-1098 / SB2B)).